Reading from the N-terminus, the 254-residue chain is Mediator of RNA polymerase II transcription subunit 4 (254 aa).

The stretch at Arg-72 to Glu-114 forms a coiled coil. The interval Ile-215 to Asp-254 is disordered. A compositionally biased stretch (low complexity) spans Ser-243–Asp-254.

Belongs to the Mediator complex subunit 4 family. Component of the Mediator complex.

The protein localises to the nucleus. Component of the Mediator complex, a coactivator involved in the regulated transcription of nearly all RNA polymerase II-dependent genes. Mediator functions as a bridge to convey information from gene-specific regulatory proteins to the basal RNA polymerase II transcription machinery. Mediator is recruited to promoters by direct interactions with regulatory proteins and serves as a scaffold for the assembly of a functional preinitiation complex with RNA polymerase II and the general transcription factors. This chain is Mediator of RNA polymerase II transcription subunit 4 (med4), found in Danio rerio (Zebrafish).